The primary structure comprises 636 residues: MQINFEPMPNSVTHLENNSPSRLKNNKTVEEHKEHEPDLQTQSEMRRESNGSPKDTAVTNQNGDQPHENVIHTQIIKKDNPFFNYMQDNVDGSDENGKNDDDDENAKNAGSDDNEDQLLQPNRRKNSKERRRSSVATSKDSSPDVPYNTLNHNASGMTKEGKKRAQILEASKVSEGQGRTYIAYAIKYGDSIVKRRYSDFESLRKVLVKLFPISLIPPIPEKQSLKSYGKAMTYSKSSYLLPTESGDSVDLSLSVINGPVTTNDEKLIRHRIRMLTSFLNRLLKNQEITKTSIVYDFLDPNNKNWNDLITSSLTISSLPKSVLQCNPIDPTNTTKAHSYLPVPSSSTQLLASKDNHSASDADEFTKIEAEFKNYEQLIHSGLYKYSRATTKEVNYLREDLKGISSEFAQLSTDETKNESGLAELLSHSSDAYGTLQEILETLVGNLHYNINEPLSECAHMATAVRDLIHYRRLKLIQKDILERTILYKRGQLIKFQQQENDHKQIDNMVKEELGTNGAVNLENPAGPQSYSGKFINKFTQLAIIIKDSVSYQEQDPAAAARSLEKELIQLDETLKVATSDLVVISETLKNTELPNFIKERDEELTQIFKNYAKYMKENATRNLEIWKELHNRIQEA.

2 disordered regions span residues 1–68 (MQIN…QPHE) and 84–163 (NYMQ…EGKK). The segment covering 10–23 (NSVTHLENNSPSRL) has biased composition (polar residues). Over residues 27–49 (KTVEEHKEHEPDLQTQSEMRRES) the composition is skewed to basic and acidic residues. Polar residues predominate over residues 50 to 64 (NGSPKDTAVTNQNGD). A compositionally biased stretch (basic residues) spans 122–133 (NRRKNSKERRRS). The PX domain maps to 160–305 (EGKKRAQILE…DFLDPNNKNW (146 aa)). Residues Arg196, Ser198, Lys222, and Arg271 each contribute to the a 1,2-diacyl-sn-glycero-3-phospho-(1D-myo-inositol-3-phosphate) site.

The protein belongs to the sorting nexin family.

It localises to the endosome membrane. The protein resides in the preautophagosomal structure membrane. Functionally, required for cytoplasm to vacuole transport (Cvt), pexophagy and mitophagy. Also involved in endoplasmic reticulum-specific autophagic process and is essential for the survival of cells subjected to severe ER stress. Functions in protein retrieval from the endocytic pathway. This is Autophagy-related protein 20 (ATG20) from Kluyveromyces lactis (strain ATCC 8585 / CBS 2359 / DSM 70799 / NBRC 1267 / NRRL Y-1140 / WM37) (Yeast).